An 86-amino-acid polypeptide reads, in one-letter code: Curamycin polyketide synthase acyl carrier protein (86 aa).

The 80-residue stretch at 7 to 86 folds into the Carrier domain; that stretch reads QVTVEELATL…VVNGALASGA (80 aa). The residue at position 44 (serine 44) is an O-(pantetheine 4'-phosphoryl)serine.

In terms of processing, 4'-phosphopantetheine is transferred from CoA to a specific serine of the apo-ACP-like protein.

It participates in antibiotic biosynthesis; curamycin biosynthesis. Its function is as follows. Acyl carrier protein. The chain is Curamycin polyketide synthase acyl carrier protein (curE) from Streptomyces cyaneus (Streptomyces curacoi).